A 173-amino-acid polypeptide reads, in one-letter code: Crossover junction endodeoxyribonuclease RuvC (173 aa).

Residues aspartate 8, glutamate 67, and aspartate 139 contribute to the active site. Mg(2+) is bound by residues aspartate 8, glutamate 67, and aspartate 139.

Belongs to the RuvC family. In terms of assembly, homodimer which binds Holliday junction (HJ) DNA. The HJ becomes 2-fold symmetrical on binding to RuvC with unstacked arms; it has a different conformation from HJ DNA in complex with RuvA. In the full resolvosome a probable DNA-RuvA(4)-RuvB(12)-RuvC(2) complex forms which resolves the HJ. It depends on Mg(2+) as a cofactor.

Its subcellular location is the cytoplasm. The catalysed reaction is Endonucleolytic cleavage at a junction such as a reciprocal single-stranded crossover between two homologous DNA duplexes (Holliday junction).. The RuvA-RuvB-RuvC complex processes Holliday junction (HJ) DNA during genetic recombination and DNA repair. Endonuclease that resolves HJ intermediates. Cleaves cruciform DNA by making single-stranded nicks across the HJ at symmetrical positions within the homologous arms, yielding a 5'-phosphate and a 3'-hydroxyl group; requires a central core of homology in the junction. The consensus cleavage sequence is 5'-(A/T)TT(C/G)-3'. Cleavage occurs on the 3'-side of the TT dinucleotide at the point of strand exchange. HJ branch migration catalyzed by RuvA-RuvB allows RuvC to scan DNA until it finds its consensus sequence, where it cleaves and resolves the cruciform DNA. In terms of biological role, plays a role in recovery after DNA ADP-ribosylation, probably via replication fork reversal. This chain is Crossover junction endodeoxyribonuclease RuvC, found in Escherichia coli O127:H6 (strain E2348/69 / EPEC).